The chain runs to 89 residues: Small ribosomal subunit protein uS15 (89 aa).

Belongs to the universal ribosomal protein uS15 family. Part of the 30S ribosomal subunit. Forms a bridge to the 50S subunit in the 70S ribosome, contacting the 23S rRNA.

In terms of biological role, one of the primary rRNA binding proteins, it binds directly to 16S rRNA where it helps nucleate assembly of the platform of the 30S subunit by binding and bridging several RNA helices of the 16S rRNA. Functionally, forms an intersubunit bridge (bridge B4) with the 23S rRNA of the 50S subunit in the ribosome. The chain is Small ribosomal subunit protein uS15 from Orientia tsutsugamushi (strain Boryong) (Rickettsia tsutsugamushi).